Consider the following 456-residue polypeptide: Crinkler effector protein 2 (456 aa).

A signal peptide spans methionine 1 to proline 17. Residues valine 18 to lysine 54 are LQLFLAK domain. A DWL domain region spans residues glutamine 55 to isoleucine 136. The HVLVXXP motif signature appears at histidine 137–proline 143. Asparagine 338 carries an N-linked (GlcNAc...) asparagine glycan.

This sequence belongs to the Crinkler effector family.

It localises to the secreted. The protein resides in the host nucleus. In terms of biological role, secreted effector that effector that induces cell death when expressed in host plants. Induces the expression of defense response genes in tomato. In Phytophthora infestans (Potato late blight agent), this protein is Crinkler effector protein 2.